Reading from the N-terminus, the 268-residue chain is 4-hydroxy-tetrahydrodipicolinate reductase (268 aa).

NAD(+) is bound by residues 9–14 (GVCGRM), Glu35, 99–101 (GTT), and 123–126 (APNY). Residue His156 is the Proton donor/acceptor of the active site. Residue His157 participates in (S)-2,3,4,5-tetrahydrodipicolinate binding. The Proton donor role is filled by Lys160. 166 to 167 (GT) contributes to the (S)-2,3,4,5-tetrahydrodipicolinate binding site.

Belongs to the DapB family.

The protein resides in the cytoplasm. The enzyme catalyses (S)-2,3,4,5-tetrahydrodipicolinate + NAD(+) + H2O = (2S,4S)-4-hydroxy-2,3,4,5-tetrahydrodipicolinate + NADH + H(+). It catalyses the reaction (S)-2,3,4,5-tetrahydrodipicolinate + NADP(+) + H2O = (2S,4S)-4-hydroxy-2,3,4,5-tetrahydrodipicolinate + NADPH + H(+). Its pathway is amino-acid biosynthesis; L-lysine biosynthesis via DAP pathway; (S)-tetrahydrodipicolinate from L-aspartate: step 4/4. In terms of biological role, catalyzes the conversion of 4-hydroxy-tetrahydrodipicolinate (HTPA) to tetrahydrodipicolinate. In Magnetococcus marinus (strain ATCC BAA-1437 / JCM 17883 / MC-1), this protein is 4-hydroxy-tetrahydrodipicolinate reductase.